The chain runs to 251 residues: Triosephosphate isomerase (251 aa).

8–10 (NWK) contributes to the substrate binding site. Histidine 97 (electrophile) is an active-site residue. The active-site Proton acceptor is the glutamate 170. Substrate contacts are provided by residues glycine 176, serine 215, and 236–237 (GG).

Belongs to the triosephosphate isomerase family. As to quaternary structure, homodimer.

It is found in the cytoplasm. The catalysed reaction is D-glyceraldehyde 3-phosphate = dihydroxyacetone phosphate. It participates in carbohydrate biosynthesis; gluconeogenesis. It functions in the pathway carbohydrate degradation; glycolysis; D-glyceraldehyde 3-phosphate from glycerone phosphate: step 1/1. Involved in the gluconeogenesis. Catalyzes stereospecifically the conversion of dihydroxyacetone phosphate (DHAP) to D-glyceraldehyde-3-phosphate (G3P). This is Triosephosphate isomerase from Nitratidesulfovibrio vulgaris (strain ATCC 29579 / DSM 644 / CCUG 34227 / NCIMB 8303 / VKM B-1760 / Hildenborough) (Desulfovibrio vulgaris).